A 482-amino-acid polypeptide reads, in one-letter code: DNA polymerase II small subunit (482 aa).

Belongs to the DNA polymerase delta/II small subunit family. As to quaternary structure, heterodimer of a large subunit and a small subunit.

The catalysed reaction is DNA(n) + a 2'-deoxyribonucleoside 5'-triphosphate = DNA(n+1) + diphosphate. It catalyses the reaction Exonucleolytic cleavage in the 3'- to 5'-direction to yield nucleoside 5'-phosphates.. Its function is as follows. Possesses two activities: a DNA synthesis (polymerase) and an exonucleolytic activity that degrades single-stranded DNA in the 3' to 5' direction. Has a template-primer preference which is characteristic of a replicative DNA polymerase. In Methanothermobacter thermautotrophicus (strain ATCC 29096 / DSM 1053 / JCM 10044 / NBRC 100330 / Delta H) (Methanobacterium thermoautotrophicum), this protein is DNA polymerase II small subunit (polB).